The chain runs to 82 residues: Small ribosomal subunit protein uS17 (82 aa).

This sequence belongs to the universal ribosomal protein uS17 family. As to quaternary structure, part of the 30S ribosomal subunit.

One of the primary rRNA binding proteins, it binds specifically to the 5'-end of 16S ribosomal RNA. The chain is Small ribosomal subunit protein uS17 from Rhodopseudomonas palustris (strain BisA53).